A 151-amino-acid chain; its full sequence is Large ribosomal subunit protein uL15 (151 aa).

This sequence belongs to the universal ribosomal protein uL15 family. Part of the 50S ribosomal subunit.

Functionally, binds to the 23S rRNA. This Hyperthermus butylicus (strain DSM 5456 / JCM 9403 / PLM1-5) protein is Large ribosomal subunit protein uL15.